A 494-amino-acid chain; its full sequence is Nicotianamine aminotransferase 1 (494 aa).

Low complexity-rich tracts occupy residues 24–38 (SGTSYPTRTTTTSSS) and 48–62 (STAMAPTTAAAAASS). A disordered region spans residues 24–76 (SGTSYPTRTTTTSSSAPEFTNKKQSTAMAPTTAAAAASSNGGGESDGSSKEWR). N6-(pyridoxal phosphate)lysine is present on lysine 322.

It belongs to the class-I pyridoxal-phosphate-dependent aminotransferase family. Pyridoxal 5'-phosphate serves as cofactor. In terms of tissue distribution, expressed in companion and pericycle cells adjacent to the protoxylem of roots. Expressed in companion cells of shoots.

It catalyses the reaction nicotianamine + 2-oxoglutarate = 3''-deamino-3''-oxonicotianamine + L-glutamate. Its function is as follows. Involved in biosynthesis of mugineic acid family phytosiderophores, which are ferric iron chelators produced in graminaceous plants in response to iron deficiency. This Oryza sativa subsp. japonica (Rice) protein is Nicotianamine aminotransferase 1.